The chain runs to 406 residues: tRNA-specific 2-thiouridylase MnmA (406 aa).

ATP-binding positions include 42–49 (GLSGGVDS) and L68. The Nucleophile role is filled by C129. An intrachain disulfide couples C129 to C239. G154 contacts ATP. Positions 189–191 (KDQ) are interaction with tRNA. C239 (cysteine persulfide intermediate) is an active-site residue. Residues 344–345 (RY) are interaction with tRNA.

It belongs to the MnmA/TRMU family.

Its subcellular location is the cytoplasm. The enzyme catalyses S-sulfanyl-L-cysteinyl-[protein] + uridine(34) in tRNA + AH2 + ATP = 2-thiouridine(34) in tRNA + L-cysteinyl-[protein] + A + AMP + diphosphate + H(+). Functionally, catalyzes the 2-thiolation of uridine at the wobble position (U34) of tRNA, leading to the formation of s(2)U34. This is tRNA-specific 2-thiouridylase MnmA from Prochlorococcus marinus (strain SARG / CCMP1375 / SS120).